A 476-amino-acid polypeptide reads, in one-letter code: Aspartyl/glutamyl-tRNA(Asn/Gln) amidotransferase subunit B (476 aa).

It belongs to the GatB/GatE family. GatB subfamily. In terms of assembly, heterotrimer of A, B and C subunits.

It catalyses the reaction L-glutamyl-tRNA(Gln) + L-glutamine + ATP + H2O = L-glutaminyl-tRNA(Gln) + L-glutamate + ADP + phosphate + H(+). It carries out the reaction L-aspartyl-tRNA(Asn) + L-glutamine + ATP + H2O = L-asparaginyl-tRNA(Asn) + L-glutamate + ADP + phosphate + 2 H(+). In terms of biological role, allows the formation of correctly charged Asn-tRNA(Asn) or Gln-tRNA(Gln) through the transamidation of misacylated Asp-tRNA(Asn) or Glu-tRNA(Gln) in organisms which lack either or both of asparaginyl-tRNA or glutaminyl-tRNA synthetases. The reaction takes place in the presence of glutamine and ATP through an activated phospho-Asp-tRNA(Asn) or phospho-Glu-tRNA(Gln). The protein is Aspartyl/glutamyl-tRNA(Asn/Gln) amidotransferase subunit B of Clostridium botulinum (strain Kyoto / Type A2).